The following is an 847-amino-acid chain: Cancer-associated gene 1 protein homolog (847 aa).

The interval 118-161 (EEKPELQSQVYNDPADASQKPDPLKEESLMESSTSENKDELVHE) is disordered. Residues 377–567 (NVILEKNDIN…AAKREAQACT (191 aa)) are a coiled coil.

The sequence is that of Cancer-associated gene 1 protein homolog (Cage1) from Rattus norvegicus (Rat).